Reading from the N-terminus, the 53-residue chain is UPF0391 membrane protein BP1737 (53 aa).

The next 2 membrane-spanning stretches (helical) occupy residues 5–25 and 30–50; these read AVVFFVIAIIAAVLGFGGIAA and IAKILFFVFLVLALLSILGGV.

It belongs to the UPF0391 family.

The protein resides in the cell membrane. The chain is UPF0391 membrane protein BP1737 from Bordetella pertussis (strain Tohama I / ATCC BAA-589 / NCTC 13251).